Here is a 219-residue protein sequence, read N- to C-terminus: Ribonuclease HII (219 aa).

An RNase H type-2 domain is found at 22–219; sequence GLVAGVDEVG…LLAMRMEAVV (198 aa). A divalent metal cation-binding residues include D28, E29, and D125.

This sequence belongs to the RNase HII family. Mn(2+) is required as a cofactor. Requires Mg(2+) as cofactor.

It is found in the cytoplasm. It carries out the reaction Endonucleolytic cleavage to 5'-phosphomonoester.. Functionally, endonuclease that specifically degrades the RNA of RNA-DNA hybrids. This chain is Ribonuclease HII, found in Granulibacter bethesdensis (strain ATCC BAA-1260 / CGDNIH1).